Here is a 245-residue protein sequence, read N- to C-terminus: MTLTASSSSRAVTNSPVVVALDYHNCDDALSFVDKIDPRDCRLKVGKEMFTLFGPQFVRELQQRGFDIFLDLKFHDIPNTAAHAVAAAADLGVWMVNVHASGGARMMTAAREALVPFGKDAPLLIAVTVLTSMEASDLADLGVTLSPADYAERLAALTQKCDLDGVVCSAQEAVRFKQVFGQEFKLVTPGIRPQGSEAGDQRRIMTPEQALAAGVDYMVIGRPVTQSVDPAQTLKAINASLQRSA.

Substrate contacts are provided by residues D22, K44, 71 to 80 (DLKFHDIPNT), T131, R192, Q201, G221, and R222. The Proton donor role is filled by K73.

The protein belongs to the OMP decarboxylase family. Type 1 subfamily. As to quaternary structure, homodimer.

The enzyme catalyses orotidine 5'-phosphate + H(+) = UMP + CO2. It participates in pyrimidine metabolism; UMP biosynthesis via de novo pathway; UMP from orotate: step 2/2. Catalyzes the decarboxylation of orotidine 5'-monophosphate (OMP) to uridine 5'-monophosphate (UMP). The sequence is that of Orotidine 5'-phosphate decarboxylase from Shigella flexneri.